Consider the following 167-residue polypeptide: Adenylylsulfate reductase subunit beta (167 aa).

2 4Fe-4S ferredoxin-type domains span residues 1–35 (MPTF…LDPE) and 38–67 (KAFN…ARPY). 8 residues coordinate [4Fe-4S] cluster: C10, C13, C21, C25, C47, C50, C53, and C57.

As to quaternary structure, heterodimer composed of AprA and AprB. The heterodimers can dimerize to form heterotetramers. The cofactor is [4Fe-4S] cluster.

It is found in the cytoplasm. In terms of biological role, iron-sulfur cluster subunit of the adenylylsulfate reductase which catalyzes reversibly the reduction of adenosine 5'-phosphosulfate (APS) to sulfite and AMP during dissimilatory sulfate reduction. The iron-sulfur cluster 2 is thought to accept electrons from a still unknown electron donor and transfer electrons to the iron-sulfur cluster 1 of this protein and then onto the FAD of AprA. This Megalodesulfovibrio gigas (strain ATCC 19364 / DSM 1382 / NCIMB 9332 / VKM B-1759) (Desulfovibrio gigas) protein is Adenylylsulfate reductase subunit beta.